Here is a 226-residue protein sequence, read N- to C-terminus: Transmembrane protein 204 (226 aa).

The Cytoplasmic segment spans residues 1–5 (MTVQK). Residues 6-26 (LVATAVLVALVSLILNNAAAF) form a helical membrane-spanning segment. Residues 27-103 (TPNWVYQTLE…LQFDMMRACN (77 aa)) lie on the Extracellular side of the membrane. Residues 104–124 (LVATAALAVGQITFILGLTGL) traverse the membrane as a helical segment. The Cytoplasmic portion of the chain corresponds to 125-136 (PLMSPESQCWEE). Residues 137–157 (AMAAAFQLASFVLVIGLVTFY) form a helical membrane-spanning segment. The Extracellular portion of the chain corresponds to 158 to 170 (RIGPYTNLSWSCY). N-linked (GlcNAc...) asparagine glycosylation occurs at Asn164. Residues 171–191 (LNIGACLLATLAAAMLIWNIL) traverse the membrane as a helical segment. At 192–226 (HRREDCMAPRVIVISRSLTARFRRGLDNDYVESPC) the chain is on the cytoplasmic side.

Its subcellular location is the cell junction. The protein localises to the adherens junction. The protein resides in the cell membrane. Its function is as follows. Can influence paracellular permeability. Appears to be involved in cell-cell interactions through adherens. This is Transmembrane protein 204 (Tmem204) from Rattus norvegicus (Rat).